A 332-amino-acid chain; its full sequence is Ketol-acid reductoisomerase (NADP(+)) (332 aa).

Residues 3–183 (TEIFYDADAD…GGARAGVIKT (181 aa)) enclose the KARI N-terminal Rossmann domain. NADP(+)-binding positions include 26 to 29 (YGSQ), Ser52, Ser54, and 84 to 87 (DTKQ). His109 is a catalytic residue. Gly135 lines the NADP(+) pocket. The region spanning 184–329 (TFTEETETDL…KKLRSLMSWT (146 aa)) is the KARI C-terminal knotted domain. The Mg(2+) site is built by Asp192, Glu196, Glu228, and Glu232. Ser253 lines the substrate pocket.

Belongs to the ketol-acid reductoisomerase family. Mg(2+) is required as a cofactor.

It catalyses the reaction (2R)-2,3-dihydroxy-3-methylbutanoate + NADP(+) = (2S)-2-acetolactate + NADPH + H(+). The enzyme catalyses (2R,3R)-2,3-dihydroxy-3-methylpentanoate + NADP(+) = (S)-2-ethyl-2-hydroxy-3-oxobutanoate + NADPH + H(+). The protein operates within amino-acid biosynthesis; L-isoleucine biosynthesis; L-isoleucine from 2-oxobutanoate: step 2/4. It functions in the pathway amino-acid biosynthesis; L-valine biosynthesis; L-valine from pyruvate: step 2/4. In terms of biological role, involved in the biosynthesis of branched-chain amino acids (BCAA). Catalyzes an alkyl-migration followed by a ketol-acid reduction of (S)-2-acetolactate (S2AL) to yield (R)-2,3-dihydroxy-isovalerate. In the isomerase reaction, S2AL is rearranged via a Mg-dependent methyl migration to produce 3-hydroxy-3-methyl-2-ketobutyrate (HMKB). In the reductase reaction, this 2-ketoacid undergoes a metal-dependent reduction by NADPH to yield (R)-2,3-dihydroxy-isovalerate. The sequence is that of Ketol-acid reductoisomerase (NADP(+)) from Saccharopolyspora erythraea (strain ATCC 11635 / DSM 40517 / JCM 4748 / NBRC 13426 / NCIMB 8594 / NRRL 2338).